Consider the following 394-residue polypeptide: Methane monooxygenase component A beta chain (394 aa).

In terms of assembly, m.trichosporium has two forms of methane monooxygenase, a soluble and a membrane-bound type. The soluble type consists of four components (A to D): protein A, comprising three chains, in an alpha-2, beta-2, gamma-2 configuration, is a nonheme iron protein containing an unusual mu-hydroxo bridge structure at its active site and interacts with both oxygen and methane.

It carries out the reaction methane + NADH + O2 + H(+) = methanol + NAD(+) + H2O. It catalyses the reaction methane + NADPH + O2 + H(+) = methanol + NADP(+) + H2O. In terms of biological role, responsible for the initial oxygenation of methane to methanol in methanotrophs. It also catalyzes the monohydroxylation of a variety of unactivated alkenes, alicyclic, aromatic and heterocyclic compounds. This chain is Methane monooxygenase component A beta chain (mmoY), found in Methylosinus trichosporium.